The chain runs to 496 residues: DEAD-box ATP-dependent RNA helicase 38 (496 aa).

Positions 1 to 91 (MADTVEKVPT…SGDTPYTSAS (91 aa)) are disordered. Ala-2 is modified (N-acetylalanine). Low complexity predominate over residues 7-25 (KVPTVVESSSSSTVEASNS). Positions 27 to 40 (EKTEPTTEKKKWGD) are enriched in basic and acidic residues. Acidic residues predominate over residues 41–51 (VEDDDDEEEAV). The span at 78-91 (KAVTSGDTPYTSAS) shows a compositional bias: polar residues. The Q motif signature appears at 91–120 (SRFEDLNLSPELMKGLYVEMKFEKPSKIQA). The region spanning 125–301 (MIMTPPHKHL…ARTVKDPNQL (177 aa)) is the Helicase ATP-binding domain. 138–145 (AHNGSGKT) provides a ligand contact to ATP. The DEAD box signature appears at 245 to 248 (DEAD). Residues 329–483 (VIKDQIMELG…EIKSWNSEEE (155 aa)) form the Helicase C-terminal domain.

Belongs to the DEAD box helicase family. DDX19/DBP5 subfamily. As to quaternary structure, interacts with NUP214 (via N-terminus). In terms of tissue distribution, constitutively expressed.

It is found in the cytoplasm. Its subcellular location is the nucleus. It carries out the reaction ATP + H2O = ADP + phosphate + H(+). Functionally, ATP-dependent RNA helicase essential for mRNA export from the nucleus. Plays an important role in the positive regulation of CBF/DREB transcription factors. This chain is DEAD-box ATP-dependent RNA helicase 38 (RH38), found in Arabidopsis thaliana (Mouse-ear cress).